The following is a 310-amino-acid chain: Homoserine O-acetyltransferase (310 aa).

The Acyl-thioester intermediate role is filled by Cys-142. 2 residues coordinate substrate: Lys-163 and Ser-192. The Proton acceptor role is filled by His-235. The active site involves Glu-237. Arg-249 is a binding site for substrate.

Belongs to the MetA family.

It localises to the cytoplasm. It carries out the reaction L-homoserine + acetyl-CoA = O-acetyl-L-homoserine + CoA. It functions in the pathway amino-acid biosynthesis; L-methionine biosynthesis via de novo pathway; O-acetyl-L-homoserine from L-homoserine: step 1/1. Its function is as follows. Transfers an acetyl group from acetyl-CoA to L-homoserine, forming acetyl-L-homoserine. The sequence is that of Homoserine O-acetyltransferase from Agathobacter rectalis (strain ATCC 33656 / DSM 3377 / JCM 17463 / KCTC 5835 / VPI 0990) (Eubacterium rectale).